We begin with the raw amino-acid sequence, 383 residues long: Deoxyguanosinetriphosphate triphosphohydrolase-like protein (383 aa).

The HD domain occupies 62 to 198 (RLTHSLEVST…AALADDISYI (137 aa)).

Belongs to the dGTPase family. Type 2 subfamily.

This chain is Deoxyguanosinetriphosphate triphosphohydrolase-like protein, found in Rickettsia bellii (strain RML369-C).